The primary structure comprises 363 residues: Forkhead box protein I1 (363 aa).

Residues 1–18 are compositionally biased toward low complexity; sequence MNPVQQPAQQRSPASSLP. Disordered stretches follow at residues 1-24, 210-269, and 344-363; these read MNPV…KRAQ, DNGN…SPPA, and TTAQ…QGRY. Residues 125–219 constitute a DNA-binding region (fork-head); sequence RPPYSYSALI…DNGNFRRKRK (95 aa). Residues 231–243 show a composition bias toward basic and acidic residues; the sequence is KIGEDHLNPKGKE. 2 stretches are compositionally biased toward low complexity: residues 244 to 258 and 347 to 363; these read SPPM…EPSP and QKQP…QGRY.

It localises to the nucleus. Transcription factor. Essential for ventral specification of the early cephalic (head) ectoderm during gastrulation, playing a role in the 'non-neural' versus 'neural' cell fate choice. Binds to DNA via the target sequence 5'-[AG]TAAA[CT]A-3', with 5'-ATAAACA-3' being the preferred binding site. The sequence is that of Forkhead box protein I1 from Xenopus tropicalis (Western clawed frog).